Here is a 346-residue protein sequence, read N- to C-terminus: S-adenosylmethionine:tRNA ribosyltransferase-isomerase (346 aa).

It belongs to the QueA family. In terms of assembly, monomer.

It is found in the cytoplasm. It carries out the reaction 7-aminomethyl-7-carbaguanosine(34) in tRNA + S-adenosyl-L-methionine = epoxyqueuosine(34) in tRNA + adenine + L-methionine + 2 H(+). It participates in tRNA modification; tRNA-queuosine biosynthesis. Its function is as follows. Transfers and isomerizes the ribose moiety from AdoMet to the 7-aminomethyl group of 7-deazaguanine (preQ1-tRNA) to give epoxyqueuosine (oQ-tRNA). The protein is S-adenosylmethionine:tRNA ribosyltransferase-isomerase of Lactococcus lactis subsp. cremoris (strain MG1363).